The following is a 318-amino-acid chain: Homoserine kinase (318 aa).

97–107 (PIGSGLGSSAC) provides a ligand contact to ATP.

Belongs to the GHMP kinase family. Homoserine kinase subfamily.

The protein resides in the cytoplasm. The catalysed reaction is L-homoserine + ATP = O-phospho-L-homoserine + ADP + H(+). Its pathway is amino-acid biosynthesis; L-threonine biosynthesis; L-threonine from L-aspartate: step 4/5. Catalyzes the ATP-dependent phosphorylation of L-homoserine to L-homoserine phosphate. This is Homoserine kinase from Vibrio cholerae serotype O1 (strain ATCC 39541 / Classical Ogawa 395 / O395).